Reading from the N-terminus, the 412-residue chain is Zinc finger protein 821 (412 aa).

A disordered region spans residues 26–83; the sequence is RQAMMKTDFPGDLGSQRQAIQQLRDQDSSSSDSEGDEEETTQDEVSSHTSEEDGGVVK. Acidic residues predominate over residues 58-67; it reads SEGDEEETTQ. C2H2-type zinc fingers lie at residues 116 to 140 and 150 to 172; these read GLCQCPLCQLDCGSREQLIAHVYQH and YMCPVCGRALSSPGSLGRHLLIH. A coiled-coil region spans residues 257 to 366; the sequence is KWALRRQNEP…EKMDMMLRAQ (110 aa). Residues 278 to 319 form a disordered region; it reads RTAKKSRRDNETPEEREVRRMRDREAKRLQRMQETDEQRARR.

The protein belongs to the krueppel C2H2-type zinc-finger protein family.

It localises to the nucleus. May be involved in transcriptional regulation. The protein is Zinc finger protein 821 (ZNF821) of Bos taurus (Bovine).